The chain runs to 81 residues: Beta-catenin-interacting protein 1 (81 aa).

A Phosphoserine modification is found at Ser-59.

It belongs to the CTNNBIP1 family. As to quaternary structure, binds CTNNB1.

The protein resides in the cytoplasm. It localises to the nucleus. Its function is as follows. Prevents the interaction between CTNNB1 and TCF family members, and acts as a negative regulator of the Wnt signaling pathway. The sequence is that of Beta-catenin-interacting protein 1 (CTNNBIP1) from Bos taurus (Bovine).